The following is a 470-amino-acid chain: Argininosuccinate lyase (470 aa).

It belongs to the lyase 1 family. Argininosuccinate lyase subfamily.

The protein resides in the cytoplasm. It catalyses the reaction 2-(N(omega)-L-arginino)succinate = fumarate + L-arginine. Its pathway is amino-acid biosynthesis; L-arginine biosynthesis; L-arginine from L-ornithine and carbamoyl phosphate: step 3/3. In Mycobacterium tuberculosis (strain CDC 1551 / Oshkosh), this protein is Argininosuccinate lyase.